The following is a 475-amino-acid chain: Sulfate adenylyltransferase subunit 1 (475 aa).

The tr-type G domain occupies 25 to 241 (KSLLRFLTCG…LENIEIQRVV (217 aa)). The segment at 34–41 (GSVDDGKS) is G1. 34-41 (GSVDDGKS) provides a ligand contact to GTP. The G2 stretch occupies residues 92 to 96 (GITID). Residues 113-116 (DTPG) are G3. GTP contacts are provided by residues 113–117 (DTPGH) and 168–171 (NKMD). The interval 168-171 (NKMD) is G4. The tract at residues 206–208 (SAL) is G5.

It belongs to the TRAFAC class translation factor GTPase superfamily. Classic translation factor GTPase family. CysN/NodQ subfamily. In terms of assembly, heterodimer composed of CysD, the smaller subunit, and CysN.

The catalysed reaction is sulfate + ATP + H(+) = adenosine 5'-phosphosulfate + diphosphate. Its pathway is sulfur metabolism; hydrogen sulfide biosynthesis; sulfite from sulfate: step 1/3. Functionally, with CysD forms the ATP sulfurylase (ATPS) that catalyzes the adenylation of sulfate producing adenosine 5'-phosphosulfate (APS) and diphosphate, the first enzymatic step in sulfur assimilation pathway. APS synthesis involves the formation of a high-energy phosphoric-sulfuric acid anhydride bond driven by GTP hydrolysis by CysN coupled to ATP hydrolysis by CysD. This chain is Sulfate adenylyltransferase subunit 1, found in Cronobacter sakazakii (strain ATCC BAA-894) (Enterobacter sakazakii).